We begin with the raw amino-acid sequence, 651 residues long: A-type voltage-gated potassium channel KCND1 (651 aa).

At 1 to 183 (MAAGVATWLP…RAFENPHTST (183 aa)) the chain is on the cytoplasmic side. The segment at 2-20 (AAGVATWLPFARAAAVGWL) is interaction with KCNIP1, KCNIP2, and other family members. Residues His104, Cys131, and Cys132 each contribute to the Zn(2+) site. The tract at residues 144-164 (AERLAEDEEAEQAGEGPALPA) is disordered. The chain crosses the membrane as a helical span at residues 184-205 (AALVFYYVTGFFIAVSVIANVV). The Extracellular portion of the chain corresponds to 206–230 (ETIPCRGTPRWPSKEQSCGDRFPTA). A helical membrane pass occupies residues 231 to 252 (FFCMDTACVLIFTGEYLLRLFA). Residues 253–263 (APSRCRFLRSV) are Cytoplasmic-facing. The helical transmembrane segment at 264 to 284 (MSLIDVVAILPYYIGLFVPKN) threads the bilayer. Topologically, residues 285-287 (DDV) are extracellular. Residues 288–308 (SGAFVTLRVFRVFRIFKFSRH) form a helical; Voltage-sensor membrane-spanning segment. At 309–323 (SQGLRILGYTLKSCA) the chain is on the cytoplasmic side. Positions 310-323 (QGLRILGYTLKSCA) are S4-S5 linker. Residues 324 to 345 (SELGFLLFSLTMAIIIFATVMF) traverse the membrane as a helical segment. Over 346–359 (YAEKGTSKTNFTSI) the chain is Extracellular. N-linked (GlcNAc...) asparagine glycosylation is present at Asn355. The segment at residues 360 to 371 (PAAFWYTIVTMT) is an intramembrane region (helical). The Selectivity filter signature appears at 372–377 (TLGYGD). The stretch at 372–379 (TLGYGDMV) is an intramembrane region. The Extracellular portion of the chain corresponds to 380 to 386 (PSTIAGK). The helical transmembrane segment at 387–415 (IFGSICSLSGVLVIALPVPVIVSNFSRIY) threads the bilayer. Over 416-651 (HQNQRADKRR…LPETVKISSL (236 aa)) the chain is Cytoplasmic. The residue at position 458 (Ser458) is a Phosphoserine. The interval 474 to 489 (FEQQHHHLLHCLEKTT) is required for dendritic targeting. Ser555 carries the post-translational modification Phosphoserine. 2 disordered regions span residues 566–585 (RRSPAPQTRSSLNAKPHDSL) and 601–651 (IPTP…ISSL). Over residues 626-637 (TPNTTLRNSSLG) the composition is skewed to polar residues.

The protein belongs to the potassium channel family. D (Shal) (TC 1.A.1.2) subfamily. Kv4.1/KCND1 sub-subfamily. Component of heteromultimeric potassium channels. Identified in potassium channel complexes containing KCND1, KCND2, KCND3, KCNIP1, KCNIP2, KCNIP3, KCNIP4, DPP6 and DPP10.

It is found in the cell membrane. It catalyses the reaction K(+)(in) = K(+)(out). In terms of biological role, A-type voltage-gated potassium channel that mediates transmembrane potassium transport in excitable membranes in the brain. Mediates A-type current I(SA) in suprachiasmatic nucleus (SCN) neurons. Exhibits a low-threshold A-type current with a hyperpolarized steady-state inactivation midpoint and the recovery process was steeply voltage-dependent, with recovery being markedly faster at more negative potentials. May regulates repetitive firing rates in the suprachiasmatic nucleus (SCN) neurons and circadian rhythms in neuronal excitability and behavior. Contributes to the regulation of the circadian rhythm of action potential firing in suprachiasmatic nucleus neurons, which regulates the circadian rhythm of locomotor activity. The regulatory subunit KCNIP1 modulates the kinetics of channel inactivation, increases the current amplitudes and accelerates recovery from inactivation, shifts activation in a depolarizing direction. The regulatory subunit DPP10 decreases the voltage sensitivity of the inactivation channel gating. The sequence is that of A-type voltage-gated potassium channel KCND1 from Mus musculus (Mouse).